Consider the following 491-residue polypeptide: Probable glycine dehydrogenase (decarboxylating) subunit 2 (491 aa).

At K264 the chain carries N6-(pyridoxal phosphate)lysine.

Belongs to the GcvP family. C-terminal subunit subfamily. The glycine cleavage system is composed of four proteins: P, T, L and H. In this organism, the P 'protein' is a heterodimer of two subunits. The cofactor is pyridoxal 5'-phosphate.

It catalyses the reaction N(6)-[(R)-lipoyl]-L-lysyl-[glycine-cleavage complex H protein] + glycine + H(+) = N(6)-[(R)-S(8)-aminomethyldihydrolipoyl]-L-lysyl-[glycine-cleavage complex H protein] + CO2. Functionally, the glycine cleavage system catalyzes the degradation of glycine. The P protein binds the alpha-amino group of glycine through its pyridoxal phosphate cofactor; CO(2) is released and the remaining methylamine moiety is then transferred to the lipoamide cofactor of the H protein. This Coxiella burnetii (strain CbuK_Q154) (Coxiella burnetii (strain Q154)) protein is Probable glycine dehydrogenase (decarboxylating) subunit 2.